Reading from the N-terminus, the 231-residue chain is Phosphoglycolate phosphatase (231 aa).

The active-site Nucleophile is D9. Mg(2+) is bound by residues D9 and D11. K154 provides a ligand contact to substrate. Mg(2+)-binding residues include D177 and D181.

It belongs to the archaeal SPP-like hydrolase family. The cofactor is Mg(2+).

It carries out the reaction 2-phosphoglycolate + H2O = glycolate + phosphate. Its function is as follows. Catalyzes the dephosphorylation of 2-phosphoglycolate. The protein is Phosphoglycolate phosphatase of Pyrococcus furiosus (strain ATCC 43587 / DSM 3638 / JCM 8422 / Vc1).